Reading from the N-terminus, the 145-residue chain is Probable inactive ribonuclease-like protein 12 (145 aa).

The N-terminal stretch at 1–19 (MILMVIVFLLLLFWENELT) is a signal peptide. Asn88 carries N-linked (GlcNAc...) asparagine glycosylation.

It belongs to the pancreatic ribonuclease family.

It localises to the secreted. Does not exhibit any ribonuclease activity. The protein is Probable inactive ribonuclease-like protein 12 (Rnase12) of Rattus norvegicus (Rat).